A 250-amino-acid polypeptide reads, in one-letter code: Heme oxygenase 2 (250 aa).

Position 16 (histidine 16) interacts with heme b. Positions 228–250 (QDRPGSTEARSTAGHPITLMVGE) are disordered.

Belongs to the heme oxygenase family. In terms of assembly, homodimer.

It catalyses the reaction heme b + 3 reduced [NADPH--hemoprotein reductase] + 3 O2 = biliverdin IXalpha + CO + Fe(2+) + 3 oxidized [NADPH--hemoprotein reductase] + 3 H2O + H(+). Catalyzes the opening of the heme ring with the release of iron. Key enzyme in the synthesis of the chromophoric part of the photosynthetic antennae. The protein is Heme oxygenase 2 (pbsA2) of Synechocystis sp. (strain ATCC 27184 / PCC 6803 / Kazusa).